A 299-amino-acid polypeptide reads, in one-letter code: Regucalcin (299 aa).

Residue Glu-18 participates in a divalent metal cation binding. 3 residues coordinate substrate: Arg-101, Asn-103, and Glu-121. Residues Asn-154 and Asp-204 each coordinate a divalent metal cation. The Proton donor/acceptor role is filled by Asp-204.

The protein belongs to the SMP-30/CGR1 family. Zn(2+) is required as a cofactor. The cofactor is Mn(2+). Ca(2+) serves as cofactor. It depends on Mg(2+) as a cofactor.

It localises to the cytoplasm. It catalyses the reaction D-glucono-1,5-lactone + H2O = D-gluconate + H(+). It functions in the pathway cofactor biosynthesis; L-ascorbate biosynthesis via UDP-alpha-D-glucuronate pathway; L-ascorbate from UDP-alpha-D-glucuronate: step 3/4. Gluconolactonase with low activity towards other sugar lactones, including gulonolactone and galactonolactone. Catalyzes a key step in ascorbic acid (vitamin C) biosynthesis. Can also hydrolyze diisopropyl phosphorofluoridate and phenylacetate (in vitro). Calcium-binding protein. Modulates Ca(2+) signaling, and Ca(2+)-dependent cellular processes and enzyme activities. This Gallus gallus (Chicken) protein is Regucalcin.